Reading from the N-terminus, the 201-residue chain is Receptor expression-enhancing protein 6 (201 aa).

3 helical membrane-spanning segments follow: residues 36–56, 89–109, and 117–137; these read LAAGALALLGLYLLFGYGASL, WVVYALFGLVEFFSDLLLFWF, and CAFLLFCMTPGPWNGALLLYH.

Belongs to the DP1 family. In terms of assembly, interacts with STX3. Interacts with clathrin. Expressed in the inner segment of rod photoreceptors and outer plexiform layer of the retina (at protein level). Expressed in liver, but not detected in brain, muscle, kidney, retinal cone photoreceptors or retinal ganglion cells (at protein level). Highly expressed in the ganglion cell layer of the retina and in liver, and also detected at low levels in kidney and testis. Isoform 1: Expressed in the retina. Isoform 2: Expressed in liver.

Its subcellular location is the endoplasmic reticulum membrane. The protein localises to the cytoplasmic vesicle. It is found in the clathrin-coated vesicle membrane. Required for correct function and survival of retinal photoreceptors. Required for retinal development. In rod photoreceptors, facilitates stability and/or trafficking of guanylate cyclases and is required to maintain endoplasmic reticulum and mitochondrial homeostasis. May play a role in clathrin-coated intracellular vesicle trafficking of proteins from the endoplasmic reticulum to the retinal rod plasma membrane. This chain is Receptor expression-enhancing protein 6 (Reep6), found in Mus musculus (Mouse).